Consider the following 273-residue polypeptide: Dermonecrotic toxin LapSicTox-alphaIB1bi (273 aa).

His-5 is a catalytic residue. The Mg(2+) site is built by Glu-25 and Asp-27. His-41 functions as the Nucleophile in the catalytic mechanism. Cystine bridges form between Cys-45–Cys-51 and Cys-47–Cys-190. Asp-85 is a binding site for Mg(2+). Residues Asn-189 and Asn-250 are each glycosylated (N-linked (GlcNAc...) asparagine).

It belongs to the arthropod phospholipase D family. Class II subfamily. Mg(2+) is required as a cofactor. As to expression, expressed by the venom gland.

It is found in the secreted. The enzyme catalyses an N-(acyl)-sphingosylphosphocholine = an N-(acyl)-sphingosyl-1,3-cyclic phosphate + choline. The catalysed reaction is an N-(acyl)-sphingosylphosphoethanolamine = an N-(acyl)-sphingosyl-1,3-cyclic phosphate + ethanolamine. It catalyses the reaction a 1-acyl-sn-glycero-3-phosphocholine = a 1-acyl-sn-glycero-2,3-cyclic phosphate + choline. It carries out the reaction a 1-acyl-sn-glycero-3-phosphoethanolamine = a 1-acyl-sn-glycero-2,3-cyclic phosphate + ethanolamine. In terms of biological role, dermonecrotic toxins cleave the phosphodiester linkage between the phosphate and headgroup of certain phospholipids (sphingolipid and lysolipid substrates), forming an alcohol (often choline) and a cyclic phosphate. This toxin acts on sphingomyelin (SM). It may also act on ceramide phosphoethanolamine (CPE), lysophosphatidylcholine (LPC) and lysophosphatidylethanolamine (LPE), but not on lysophosphatidylserine (LPS), and lysophosphatidylglycerol (LPG). It acts by transphosphatidylation, releasing exclusively cyclic phosphate products as second products. Induces dermonecrosis, hemolysis, increased vascular permeability, edema, inflammatory response, and platelet aggregation. The protein is Dermonecrotic toxin LapSicTox-alphaIB1bi of Loxosceles apachea (Apache recluse spider).